We begin with the raw amino-acid sequence, 419 residues long: Serine--tRNA ligase (419 aa).

The disordered stretch occupies residues 45–66 (ADSLRAEQKAASKSVGGASPEE). 226–228 (TSE) contributes to the L-serine binding site. Residues 257–259 (RRE) and V273 contribute to the ATP site. Residue E280 coordinates L-serine. Residue 344–347 (ELTS) coordinates ATP. T379 contacts L-serine.

This sequence belongs to the class-II aminoacyl-tRNA synthetase family. Type-1 seryl-tRNA synthetase subfamily. As to quaternary structure, homodimer. The tRNA molecule binds across the dimer.

It localises to the cytoplasm. It catalyses the reaction tRNA(Ser) + L-serine + ATP = L-seryl-tRNA(Ser) + AMP + diphosphate + H(+). The catalysed reaction is tRNA(Sec) + L-serine + ATP = L-seryl-tRNA(Sec) + AMP + diphosphate + H(+). The protein operates within aminoacyl-tRNA biosynthesis; selenocysteinyl-tRNA(Sec) biosynthesis; L-seryl-tRNA(Sec) from L-serine and tRNA(Sec): step 1/1. Functionally, catalyzes the attachment of serine to tRNA(Ser). Is also able to aminoacylate tRNA(Sec) with serine, to form the misacylated tRNA L-seryl-tRNA(Sec), which will be further converted into selenocysteinyl-tRNA(Sec). This Mycobacterium ulcerans (strain Agy99) protein is Serine--tRNA ligase.